A 261-amino-acid polypeptide reads, in one-letter code: Cytochrome c oxidase subunit 3 (261 aa).

Over 1–15 (MTHQTHAYHMVNPSP) the chain is Mitochondrial matrix. The helical transmembrane segment at 16–34 (WPLTGALSALLMTSGLIMW) threads the bilayer. At 35 to 40 (FHFNST) the chain is on the mitochondrial intermembrane side. The chain crosses the membrane as a helical span at residues 41 to 66 (TLLMLGLTTNMLTMYQWWRDVVREST). Residues 67–72 (FQGHHT) lie on the Mitochondrial matrix side of the membrane. The helical transmembrane segment at 73–105 (PNVQKGLRYGMILFIISEVLFFTGFFWAFYHSS) threads the bilayer. Over 106-128 (LAPTPELGGCWPPTGIHPLNPLE) the chain is Mitochondrial intermembrane. Residues 129–152 (VPLLNTSVLLASGVSITWAHHSLM) traverse the membrane as a helical segment. Topologically, residues 153–155 (EGN) are mitochondrial matrix. A helical transmembrane segment spans residues 156–183 (RNHMLQALFITIALGVYFTLLQASEYYE). Residues 184–190 (APFTISD) lie on the Mitochondrial intermembrane side of the membrane. Residues 191–223 (GVYGSTFFVATGFHGLHVIIGSTFLIVCFFRQL) form a helical membrane-spanning segment. At 224–232 (KFHFTSSHH) the chain is on the mitochondrial matrix side. The chain crosses the membrane as a helical span at residues 233 to 256 (FGFEAAAWYWHFVDVVWLFLYVSI). The Mitochondrial intermembrane portion of the chain corresponds to 257-261 (YWWGS).

The protein belongs to the cytochrome c oxidase subunit 3 family. Component of the cytochrome c oxidase (complex IV, CIV), a multisubunit enzyme composed of 14 subunits. The complex is composed of a catalytic core of 3 subunits MT-CO1, MT-CO2 and MT-CO3, encoded in the mitochondrial DNA, and 11 supernumerary subunits COX4I, COX5A, COX5B, COX6A, COX6B, COX6C, COX7A, COX7B, COX7C, COX8 and NDUFA4, which are encoded in the nuclear genome. The complex exists as a monomer or a dimer and forms supercomplexes (SCs) in the inner mitochondrial membrane with NADH-ubiquinone oxidoreductase (complex I, CI) and ubiquinol-cytochrome c oxidoreductase (cytochrome b-c1 complex, complex III, CIII), resulting in different assemblies (supercomplex SCI(1)III(2)IV(1) and megacomplex MCI(2)III(2)IV(2)).

It localises to the mitochondrion inner membrane. It carries out the reaction 4 Fe(II)-[cytochrome c] + O2 + 8 H(+)(in) = 4 Fe(III)-[cytochrome c] + 2 H2O + 4 H(+)(out). Its function is as follows. Component of the cytochrome c oxidase, the last enzyme in the mitochondrial electron transport chain which drives oxidative phosphorylation. The respiratory chain contains 3 multisubunit complexes succinate dehydrogenase (complex II, CII), ubiquinol-cytochrome c oxidoreductase (cytochrome b-c1 complex, complex III, CIII) and cytochrome c oxidase (complex IV, CIV), that cooperate to transfer electrons derived from NADH and succinate to molecular oxygen, creating an electrochemical gradient over the inner membrane that drives transmembrane transport and the ATP synthase. Cytochrome c oxidase is the component of the respiratory chain that catalyzes the reduction of oxygen to water. Electrons originating from reduced cytochrome c in the intermembrane space (IMS) are transferred via the dinuclear copper A center (CU(A)) of subunit 2 and heme A of subunit 1 to the active site in subunit 1, a binuclear center (BNC) formed by heme A3 and copper B (CU(B)). The BNC reduces molecular oxygen to 2 water molecules using 4 electrons from cytochrome c in the IMS and 4 protons from the mitochondrial matrix. The polypeptide is Cytochrome c oxidase subunit 3 (MT-CO3) (Gazella spekei (Speke's gazelle)).